The chain runs to 100 residues: Replication restart protein PriB (100 aa).

Residues 1–100 (MTNRIELSGV…VLHADKISQI (100 aa)) enclose the SSB domain.

It belongs to the PriB family. In terms of assembly, homodimer. Interacts with PriA and DnaT. Component of the replication restart primosome. Primosome assembly occurs via a 'hand-off' mechanism. PriA binds to replication forks, subsequently PriB then DnaT bind; DnaT then displaces ssDNA to generate the helicase loading substrate.

Its function is as follows. Involved in the restart of stalled replication forks, which reloads the replicative helicase on sites other than the origin of replication; the PriA-PriB pathway is the major replication restart pathway. During primosome assembly it facilitates complex formation between PriA and DnaT on DNA; stabilizes PriA on DNA. Stimulates the DNA unwinding activity of PriA helicase. This Vibrio cholerae serotype O1 (strain ATCC 39315 / El Tor Inaba N16961) protein is Replication restart protein PriB.